The chain runs to 51 residues: Large ribosomal subunit protein eL39 (51 aa).

The protein belongs to the eukaryotic ribosomal protein eL39 family.

The protein is Large ribosomal subunit protein eL39 of Saccharolobus islandicus (strain L.S.2.15 / Lassen #1) (Sulfolobus islandicus).